The following is a 514-amino-acid chain: Synaptic vesicular amine transporter (514 aa).

The Cytoplasmic segment spans residues 1 to 20 (MALSELALVRWLQESRRSRK). The helical transmembrane segment at 21-41 (LILFIVFLALLLDNMLLTVVV) threads the bilayer. Topologically, residues 42 to 129 (PIIPSYLYSI…EDKDLLNENV (88 aa)) are lumenal, vesicle. N-linked (GlcNAc...) asparagine glycans are attached at residues asparagine 84 and asparagine 91. Cysteine 117 and cysteine 324 are joined by a disulfide. The helical transmembrane segment at 130 to 150 (QVGLLFASKATVQLITNPFIG) threads the bilayer. The Cytoplasmic segment spans residues 151–159 (LLTNRIGYP). Residues 160 to 180 (IPIFAGFCIMFVSTIMFAFSS) form a helical membrane-spanning segment. Residues 181 to 189 (SYAFLLIAR) are Lumenal, vesicle-facing. The chain crosses the membrane as a helical span at residues 190 to 210 (SLQGIGSSCSSVAGMGMLASV). The Cytoplasmic portion of the chain corresponds to 211-219 (YTDDEERGN). Residues 220–242 (VMGIALGGLAMGVLVGPPFGSVL) form a helical membrane-spanning segment. Serotonin contacts are provided by leucine 228 and valine 232. Topologically, residues 243–248 (YEFVGK) are lumenal, vesicle. The helical transmembrane segment at 249 to 271 (TAPFLVLAALVLLDGAIQLFVLQ) threads the bilayer. Over 272 to 291 (PSRVQPESQKGTPLTTLLKD) the chain is Cytoplasmic. A helical transmembrane segment spans residues 292–311 (PYILIAAGSICFANMGIAML). Serotonin contacts are provided by asparagine 305, isoleucine 308, glutamate 312, phenylalanine 334, and tyrosine 341. At 312–328 (EPALPIWMMETMCSRKW) the chain is on the lumenal, vesicle side. The helical transmembrane segment at 329 to 352 (QLGVAFLPASISYLIGTNIFGILA) threads the bilayer. The Cytoplasmic segment spans residues 353-357 (HKMGR). A helical membrane pass occupies residues 358–378 (WLCALLGMIIVGVSILCIPFA). Over 379-389 (KNIYGLIAPNF) the chain is Lumenal, vesicle. Residues 390–410 (GVGFAIGMVDSSMMPIMGYLV) traverse the membrane as a helical segment. Serotonin is bound at residue aspartate 399. The Cytoplasmic portion of the chain corresponds to 411–414 (DLRH). A helical transmembrane segment spans residues 415-435 (VSVYGSVYAIADVAFCMGYAI). Tyrosine 433 is a serotonin binding site. At 436–440 (GPSAG) the chain is on the lumenal, vesicle side. A helical transmembrane segment spans residues 441–462 (GAIAKAIGFPWLMTIIGIIDIL). Topologically, residues 463–514 (FAPLCFFLRSPPAKEEKMAILMDHNCPIKTKMYTQNNIQSYPIGEDEESESD) are cytoplasmic. 2 positions are modified to phosphoserine: serine 511 and serine 513.

Belongs to the major facilitator superfamily. Vesicular transporter family. Interacts with SLC6A3. As to expression, expressed in neuronal and neuroendocrine tissues. Detected in central and peripheral nervous system in particular in axonal and dendritic processes in dopaminergic cells of substantia nigra, histaminergic neuronal cell bodies of substantia nigra and tuberomammillary nucleus, in ganglion cells of sympathetic glia and in peripheral sympathetic nerve terminals in stomach and duodenum (at protein level). Highly expressed in chromaffin cells of the adrenal medulla and histamine-storing enterochromaffin-like cells of oxyntic mucosa (at protein level).

Its subcellular location is the cytoplasmic vesicle. The protein localises to the secretory vesicle. The protein resides in the synaptic vesicle membrane. It localises to the secretory vesicle membrane. It is found in the cell projection. Its subcellular location is the axon. The protein localises to the dendrite. The enzyme catalyses serotonin(in) + 2 H(+)(out) = serotonin(out) + 2 H(+)(in). The catalysed reaction is dopamine(in) + 2 H(+)(out) = dopamine(out) + 2 H(+)(in). It carries out the reaction histamine(in) + 2 H(+)(out) = histamine(out) + 2 H(+)(in). Its activity is regulated as follows. Strongly inhibited by reserpine and tetrabenazine. Also inhibited to a lesser extent by ketanserin and fenfluramine. Reserpine and ketanserin inhibit by blocking the substrate-binding pocket. Tetrabenazine traps SLC18A2/VMAT2 in an occluded conformation and its inhibition is specific to SLC18A2/VMAT2 but not SLC18A1/VMAT1. Functionally, electrogenic antiporter that exchanges one cationic monoamine with two intravesicular protons across the membrane of secretory and synaptic vesicles. Uses the electrochemical proton gradient established by the V-type proton-pump ATPase to accumulate high concentrations of monoamines inside the vesicles prior to their release via exocytosis. Transports a variety of catecholamines such as dopamine, adrenaline and noradrenaline, histamine, and indolamines such as serotonin. Regulates the transvesicular monoaminergic gradient that determines the quantal size. Mediates somatodendritic dopamine release in hippocampal neurons, likely as part of a regulated secretory pathway that integrates retrograde synaptic signals. Acts as a primary transporter for striatal dopamine loading ensuring impulse-dependent release of dopamine at the synaptic cleft. Responsible for histamine and serotonin storage and subsequent corelease from mast cell granules. The polypeptide is Synaptic vesicular amine transporter (SLC18A2) (Homo sapiens (Human)).